The following is a 71-amino-acid chain: UPF0346 protein SUB0487 (71 aa).

The protein belongs to the UPF0346 family.

This chain is UPF0346 protein SUB0487, found in Streptococcus uberis (strain ATCC BAA-854 / 0140J).